Consider the following 638-residue polypeptide: LIM domain kinase 2 (638 aa).

LIM zinc-binding domains follow at residues 12–63 (CPGC…CPKD) and 72–124 (CHGC…CGKC). A PDZ domain is found at 152–239 (LISMPATTEG…TLQLLIEHDP (88 aa)). Threonine 210 is subject to Phosphothreonine. Residues 279–304 (LRRRSLRRSNSISKSPGPSSPKEPLL) form a disordered region. The segment covering 286-302 (RSNSISKSPGPSSPKEP) has biased composition (low complexity). Phosphoserine occurs at positions 293 and 298. A Protein kinase domain is found at 331–608 (LIHGEVLGKG…DSFEALSLYL (278 aa)). Residues 337-345 (LGKGFFGQA) and lysine 360 each bind ATP. Aspartate 451 is an active-site residue. At threonine 505 the chain carries Phosphothreonine; by ROCK1 and CDC42BP.

This sequence belongs to the protein kinase superfamily. TKL Ser/Thr protein kinase family. Interacts with LIMK2b. As to quaternary structure, interacts with LIMK2a. In terms of assembly, binds ROCK1 and MARF1. Interacts with NISCH. In terms of processing, phosphorylated on serine and/or threonine residues by ROCK1.

The protein localises to the cytoplasm. It is found in the cytoskeleton. Its subcellular location is the spindle. It localises to the microtubule organizing center. The protein resides in the centrosome. The protein localises to the nucleus. It is found in the perinuclear region. The catalysed reaction is L-seryl-[protein] + ATP = O-phospho-L-seryl-[protein] + ADP + H(+). It carries out the reaction L-threonyl-[protein] + ATP = O-phospho-L-threonyl-[protein] + ADP + H(+). Serine/threonine-protein kinase that plays an essential role in the regulation of actin filament dynamics. Acts downstream of several Rho family GTPase signal transduction pathways. Involved in astral microtubule organization and mitotic spindle orientation during early stages of mitosis by mediating phosphorylation of TPPP. Displays serine/threonine-specific phosphorylation of myelin basic protein and histone (MBP) in vitro. Suppresses ciliogenesis via multiple pathways; phosphorylation of CFL1, suppression of directional trafficking of ciliary vesicles to the ciliary base, and by facilitating YAP1 nuclear localization where it acts as a transcriptional corepressor of the TEAD4 target genes AURKA and PLK1. This chain is LIM domain kinase 2 (LIMK2), found in Homo sapiens (Human).